The sequence spans 303 residues: Cytosolic-abundant heat soluble protein 3 (303 aa).

A compositionally biased stretch (low complexity) spans 1–19 (MSSRQNQQSSSQHSSSSQQ). Positions 1–67 (MSSRQNQQSS…PGSHSEVHEE (67 aa)) are disordered. Residues 170–257 (ARQDEQDAGM…ESAKAQTNVN (88 aa)) are a coiled coil. CAHS motif regions lie at residues 184 to 202 (YREE…LERQ) and 221 to 239 (QERE…LELE). Positions 270–280 (KGAIQTSADKS) are enriched in polar residues. Residues 270–303 (KGAIQTSADKSSTTKTGPTTVTQIKHTEQHTERR) form a disordered region. A compositionally biased stretch (low complexity) spans 282–291 (TTKTGPTTVT). Basic and acidic residues predominate over residues 294-303 (KHTEQHTERR).

The protein belongs to the Cytosolic-abundant heat soluble protein (CAHS) family.

Its subcellular location is the cytoplasm. Its function is as follows. CAHS proteins are cytosolic heat soluble proteins that seem to contribute to the anhydrobiosis in tardigrades, but their specific mechanisms are yet to be identified. It is possible that protection during anhydrobiosis might occur via the stabilization of vitrifying small molecules such as sugars, but not via the direct glass transition of CAHS proteins themselves. The protein is Cytosolic-abundant heat soluble protein 3 of Ramazzottius varieornatus (Water bear).